The chain runs to 251 residues: MAKSSLSLNWSLLVLLNFLGATLSTGTDSLSCELTFNHRTLHGQCSVNGKTLLDFGDKKHEGNATEMCADLSQSLRELSEGMRNQQSGNDALNVTTQSQYNQGEFIGGFWAINTDEQHSIYFYPLNMTWRESHSDNSSAMEHWKNKNLEKDIRNVLIIYFSRCLNKLSPHFREMPKSKIKVLDTTQNTNTTQIHPTVNNSQHNSDTQGLSFTWIVIICIGGIVSFMAFMVFAWCMLKKKKGALCCSSSSTT.

The signal sequence occupies residues methionine 1–serine 24. Topologically, residues threonine 25–threonine 212 are extracellular. 4 N-linked (GlcNAc...) asparagine glycosylation sites follow: asparagine 63, asparagine 93, asparagine 126, and asparagine 189. The helical transmembrane segment at tryptophan 213–tryptophan 233 threads the bilayer. Residues cysteine 234–threonine 251 are Cytoplasmic-facing.

It belongs to the NKG2D ligand family. As to expression, in strain C57BL/6J, strongly expressed in cardiac muscle and skeletal muscle, with lower expression levels in spleen, liver, kidney and thymus. In strain BALB/cJ, weakly expressed in cardiac muscle, spleen, kidney and thymus.

It is found in the cell membrane. Its function is as follows. Ligand for the KLRK1 immunosurveillance receptor. Binding to KLRK1 stimulates cell lysis in vitro. The sequence is that of Histocompatibility antigen 60b from Mus musculus (Mouse).